Here is a 365-residue protein sequence, read N- to C-terminus: PHD finger protein 6 (365 aa).

Residue Ser2 is modified to N-acetylserine. 2 short sequence motifs (nuclear localization signal) span residues 13 to 16 and 129 to 133; these read RQRK and RKHKK. The C2HC pre-PHD-type 1 zinc finger occupies 14–52; sequence QRKCGFCKSNRDKECGQLLISENQKVAAHHKCMLFSSAL. Residues 14–132 form an extended PHD1 domain (ePHD1) region; it reads QRKCGFCKSN…IYMVYCRKHK (119 aa). The PHD-type 1 zinc finger occupies 80-132; that stretch reads LMCSLCHCPGATIGCDVKTCHRTYHYHCALHDKAQIREKPSQGIYMVYCRKHK. Residues Ser138, Ser145, and Ser155 each carry the phosphoserine modification. The interval 139–211 is disordered; it reads EADLEESFNE…RSSPSDTRPK (73 aa). The short motif at 157–169 is the Nucleolar localization signal element; it reads KSKKKSRKGRPRK. The segment covering 157-171 has biased composition (basic residues); it reads KSKKKSRKGRPRKTN. A Glycyl lysine isopeptide (Lys-Gly) (interchain with G-Cter in SUMO2) cross-link involves residue Lys173. Phosphoserine is present on residues Ser183 and Ser199. Residues 209–249 form a C2HC pre-PHD-type 2 zinc finger; that stretch reads RPKCGFCHVGEEENQARGKLHIFNAKKAAAHYKCMLFSSGT. The extended PHD2 domain (ePHD2) stretch occupies residues 209–330; sequence RPKCGFCHVG…IYKLYCKNHS (122 aa). Residue Lys227 forms a Glycyl lysine isopeptide (Lys-Gly) (interchain with G-Cter in SUMO2) linkage. The PHD-type 2 zinc-finger motif lies at 278-330; the sequence is MKCTLCSQPGATIGCEIKACVKTYHYHCGVQDKAKYIENMSRGIYKLYCKNHS. The disordered stretch occupies residues 330–365; that stretch reads SGNDERDEEDEERESKSRGKVEIDQQQLTQQQLNGN. Residues 342 to 352 are compositionally biased toward basic and acidic residues; the sequence is RESKSRGKVEI. The span at 354 to 365 shows a compositional bias: low complexity; the sequence is QQQLTQQQLNGN. The residue at position 358 (Thr358) is a Phosphothreonine.

Interacts with UBTF. Interacts with the NuRD complex component RBBP4 (via the nucleolar localization motif), the interaction mediates transcriptional repression activity.

The protein localises to the nucleus. It localises to the nucleolus. The protein resides in the chromosome. It is found in the centromere. Its subcellular location is the kinetochore. Functionally, transcriptional regulator that associates with ribosomal RNA promoters and suppresses ribosomal RNA (rRNA) transcription. This Bos taurus (Bovine) protein is PHD finger protein 6 (PHF6).